The following is a 465-amino-acid chain: Protein maelstrom (465 aa).

The segment at residues 2 to 69 (APKKHSGFMM…ADRGKRERLN (68 aa)) is a DNA-binding region (HMG box). The tract at residues 415 to 440 (MRKSSKHTGPSVSTQRERNAGAWNLP) is disordered.

The protein belongs to the maelstrom family.

The protein localises to the cytoplasm. Its subcellular location is the nucleus. Its function is as follows. Involved both in the piRNA and miRNA metabolic processes. As a component of the meiotic nuage, plays a central role during oogenesis by repressing transposable elements and preventing their mobilization, which is essential for the germline integrity. Repression of transposable elements is mediated via the piRNA metabolic process, which mediates the repression of transposable elements during meiosis by forming complexes composed of piRNAs and Piwi proteins and governs the repression of transposons. As a nuclear component, it is required for proper differentiation in the germline stem cell (GSC) lineage by repressing microRNA-7 (miR-7), thereby acting as an indirect regulator of bag-of-marbles (Bam). Acts by binding to the promoter of miR-7 gene and repressing its expression; miR-7 repression alleviates the Bam repression by miR-7, thereby allowing differentiation in the germline stem cell (GSC) lineage. This is Protein maelstrom (mael) from Drosophila yakuba (Fruit fly).